The sequence spans 246 residues: Carboxylesterase (246 aa).

The active-site Nucleophile is the Ser93. Residues Asp192 and His222 each act as charge relay system in the active site.

The protein belongs to the lipase/esterase LIP3/BchO family. Homodimer.

The enzyme catalyses a carboxylic ester + H2O = an alcohol + a carboxylate + H(+). Functionally, involved in the detoxification of xenobiotics. Shows maximal activity with C6 substrates, with gradually decreasing activity from C8 to C12 substrates. No activity for higher chain length substrates acids rather than long-chain ones. This chain is Carboxylesterase (est), found in Bacillus subtilis (strain 168).